Here is a 226-residue protein sequence, read N- to C-terminus: 2-C-methyl-D-erythritol 4-phosphate cytidylyltransferase (226 aa).

Belongs to the IspD/TarI cytidylyltransferase family. IspD subfamily.

It carries out the reaction 2-C-methyl-D-erythritol 4-phosphate + CTP + H(+) = 4-CDP-2-C-methyl-D-erythritol + diphosphate. The protein operates within isoprenoid biosynthesis; isopentenyl diphosphate biosynthesis via DXP pathway; isopentenyl diphosphate from 1-deoxy-D-xylulose 5-phosphate: step 2/6. Its function is as follows. Catalyzes the formation of 4-diphosphocytidyl-2-C-methyl-D-erythritol from CTP and 2-C-methyl-D-erythritol 4-phosphate (MEP). The chain is 2-C-methyl-D-erythritol 4-phosphate cytidylyltransferase from Trichodesmium erythraeum (strain IMS101).